We begin with the raw amino-acid sequence, 378 residues long: MAVNVNTNVSAMTAQRYLNNANSAQQTSMERLSSGFKINSAKDDAAGLQISNRLNVQSRGLDVAVRNANDGISIAQTAEGAMNETTNILQRMRDLSLQSANGSNSKAERVAIQEEVTALNDELNRIAETTSFGGNKLLNGTHGAKSFQIGADNGEAVMLELKDMRSDNKMMGGVSYQAESGKGKDWNVAQGKNDLKISLTDSFGQEQEININAKAGDDIEELATYINGQTDLVKASVDQDGKLQIFAGNNKVEGEVSFSGGLSGELGLGDDKKNVTVDTIDVTSVGGAQESVAIIDAALKYVDSHRAELGAFQNRFNHAISNLDNINENVNASKSRIKDTDFAKETTAMTKSQILSQASSSILAQAKQAPNSALSLLG.

Coiled-coil stretches lie at residues 103–128 (SNSK…RIAE) and 311–340 (AFQN…IKDT).

The protein belongs to the bacterial flagellin family. Heteromer of multiple flagellin subunits including FlaA, FlaB/D, FlaC, FlaE and FlaF.

It localises to the secreted. The protein localises to the bacterial flagellum. Flagellin is the subunit protein which polymerizes to form the filaments of bacterial flagella. FlaB/D is not essential for polar flagellar synthesis and swimming motility. Homomer of FlaB/D is not able to form a functional filament. This Vibrio parahaemolyticus serotype O3:K6 (strain RIMD 2210633) protein is Polar flagellin B/D (flaB).